Here is a 132-residue protein sequence, read N- to C-terminus: MKHRDIRKVIIDALESAIGTDAIYFDGRPAVLEEGDFPAVAVYLTDAEYTGEELDADTWQAILHIEVFLEAQVPDSELDDWMETRVYPVLAEVPGLESLITTMVQQGYDYQRDDDMALWSSADLKYSITYDM.

It belongs to the lambda-like tail terminator protein family. As to quaternary structure, homohexamer. May bind to major tail protein and /or tape measure protein.

The protein resides in the virion. The protein localises to the host cytoplasm. Its function is as follows. Plays an essential role in tail assembly by capping the rapidly polymerizing tail once it has reached its requisite length and serving as the interaction surface for the completion protein. This Escherichia phage N15 (Bacteriophage N15) protein is Tail tube terminator protein.